The following is a 429-amino-acid chain: UPF0597 protein GSU1527 (429 aa).

The protein belongs to the UPF0597 family.

The polypeptide is UPF0597 protein GSU1527 (Geobacter sulfurreducens (strain ATCC 51573 / DSM 12127 / PCA)).